Here is a 201-residue protein sequence, read N- to C-terminus: Large ribosomal subunit protein uL4 (201 aa).

Residues 42-67 form a disordered region; it reads GNSAQKTRSEVSGGGKKPWNQKGTGR.

Belongs to the universal ribosomal protein uL4 family. Part of the 50S ribosomal subunit.

Its function is as follows. One of the primary rRNA binding proteins, this protein initially binds near the 5'-end of the 23S rRNA. It is important during the early stages of 50S assembly. It makes multiple contacts with different domains of the 23S rRNA in the assembled 50S subunit and ribosome. In terms of biological role, forms part of the polypeptide exit tunnel. In Legionella pneumophila (strain Corby), this protein is Large ribosomal subunit protein uL4.